A 262-amino-acid polypeptide reads, in one-letter code: MAIGKNKRISKGRKGGRKKVVDPLSRKEFYDLRAPSTFKVRNFGTTIASKNQGTKLAVDALRHRVYEVSLADLNNDEDQAFRKIKLQCEDIQGRTCLTEFHGMDMTRDKLCSLIRKYQTLIEAHCNVKTSDGYVLRLFCIAFTRRMADQVKSTCYAQTSQIRQIRKKMVEIITAEAEGTTLRDLVKKFIPESIGKEIEKACRHIFPLQHVFIRKVKVLSKPSFDVSRLMESHVGADGVEEKGTKVVSESNQATNLLTAEMKA.

This sequence belongs to the eukaryotic ribosomal protein eS1 family. In terms of assembly, component of the small ribosomal subunit. Mature ribosomes consist of a small (40S) and a large (60S) subunit. The 40S subunit contains about 33 different proteins and 1 molecule of RNA (18S). The 60S subunit contains about 49 different proteins and 3 molecules of RNA (25S, 5.8S and 5S).

It is found in the cytoplasm. The protein is Small ribosomal subunit protein eS1 of Cryptosporidium hominis.